Consider the following 510-residue polypeptide: Probable gamma-aminobutyrate transaminase 3, mitochondrial (510 aa).

A mitochondrion-targeting transit peptide spans 1–41 (MICRSLLLLRSNAASKASSIVKHVAATGCLPEYSSEAPARY). A pyridoxal 5'-phosphate-binding site is contributed by 166-167 (GS). Tyr199 contacts substrate. Asp306 is a pyridoxal 5'-phosphate binding site. Substrate is bound at residue Lys335. Lys335 is subject to N6-(pyridoxal phosphate)lysine.

The protein belongs to the class-III pyridoxal-phosphate-dependent aminotransferase family.

The protein localises to the mitochondrion. It carries out the reaction 4-aminobutanoate + pyruvate = succinate semialdehyde + L-alanine. It catalyses the reaction 4-aminobutanoate + glyoxylate = succinate semialdehyde + glycine. In terms of biological role, transaminase that degrades gamma-amino butyric acid (GABA). In Oryza sativa subsp. indica (Rice), this protein is Probable gamma-aminobutyrate transaminase 3, mitochondrial.